A 351-amino-acid chain; its full sequence is Anthranilate phosphoribosyltransferase (351 aa).

Residues Gly80, 83–84 (GD), Thr88, 90–93 (NVST), 108–116 (KHGNRSVTS), and Ser120 contribute to the 5-phospho-alpha-D-ribose 1-diphosphate site. Gly80 lines the anthranilate pocket. Ser92 is a Mg(2+) binding site. Position 111 (Asn111) interacts with anthranilate. Arg166 provides a ligand contact to anthranilate. Asp229 and Glu230 together coordinate Mg(2+).

Belongs to the anthranilate phosphoribosyltransferase family. In terms of assembly, homodimer. Mg(2+) is required as a cofactor.

The catalysed reaction is N-(5-phospho-beta-D-ribosyl)anthranilate + diphosphate = 5-phospho-alpha-D-ribose 1-diphosphate + anthranilate. The protein operates within amino-acid biosynthesis; L-tryptophan biosynthesis; L-tryptophan from chorismate: step 2/5. Functionally, catalyzes the transfer of the phosphoribosyl group of 5-phosphorylribose-1-pyrophosphate (PRPP) to anthranilate to yield N-(5'-phosphoribosyl)-anthranilate (PRA). This chain is Anthranilate phosphoribosyltransferase, found in Prosthecochloris aestuarii (strain DSM 271 / SK 413).